Reading from the N-terminus, the 114-residue chain is MADQYHEPVSELTGKDRDFVRALNSLKEEIEAVAWYHQRVVTTKDETVRKILEHNRDEEMEHAAMLLEWLRRNMPGWDEALRTYLFTDKPITEIEEETSGGSENTGGDLGIRKL.

Glu-29, Glu-59, and His-62 together coordinate Fe cation. The cargo-loading peptide stretch occupies residues 86 to 114; sequence FTDKPITEIEEETSGGSENTGGDLGIRKL. The segment at 94-114 is disordered; that stretch reads IEEETSGGSENTGGDLGIRKL. A compositionally biased stretch (gly residues) spans 103–114; it reads ENTGGDLGIRKL.

This sequence belongs to the ferritin-like superfamily. Probably forms a decamer which binds to the pentameric axis of the interior of the protein shell; as the Flp cargo protein is flexible, packing into the shell is not rigid. 3, 4 or 5 cargo decamers bind inside the encapulin nanocompartment. Fe cation serves as cofactor.

The protein resides in the encapsulin nanocompartment. In terms of biological role, cargo protein of a type 1 encapsulin nanocompartment. A ferritin-like protein that probably stores iron in the encapsulin nanocompartment. This is Ferritin-like protein from Thermotoga maritima (strain ATCC 43589 / DSM 3109 / JCM 10099 / NBRC 100826 / MSB8).